A 444-amino-acid polypeptide reads, in one-letter code: MQVSLETTTGLERKLTVGIPASVVDQEVAKRLKEAAKTVRINGFRKGKVPMSVVQQRYGAGVRQEVLGDAINRSFYDAVRKESLRPAGQPAIEPKQLEPGKDIEFVATFEVYPEIEVSGLESIEVTRYNAEVTDADVDTMIETLQKSQADWAPVKRKSKKGDRVVIDFKGTKDGEAFEGGTAEGQTLVLGSNSMIPGFEKGIIGMKAGETETIKVTFPDDYQEESLRGAEAEFEVTVQKVEGQKLPKLDDEFFAKFGVTEGGEEKFRADVRENMEREKQKALKGKLKEQVMNGLVAANTVDIPKSLVSGEIDALRNQMGNQMMQQYGSQAEGIDFKSILPDDMFKEQAERRVALGLIVSEIVKNEKISVDKELVKSLIEDVASTYEHPEEVVNYYYGNEQLLGGVEAAALEEQVVSLVLSKAKVSDETISYEEAVKPAAKQAEE.

The 86-residue stretch at 161–246 folds into the PPIase FKBP-type domain; that stretch reads GDRVVIDFKG…VQKVEGQKLP (86 aa).

It belongs to the FKBP-type PPIase family. Tig subfamily.

It localises to the cytoplasm. The enzyme catalyses [protein]-peptidylproline (omega=180) = [protein]-peptidylproline (omega=0). In terms of biological role, involved in protein export. Acts as a chaperone by maintaining the newly synthesized protein in an open conformation. Functions as a peptidyl-prolyl cis-trans isomerase. This is Trigger factor from Saccharophagus degradans (strain 2-40 / ATCC 43961 / DSM 17024).